A 400-amino-acid chain; its full sequence is 3-phenylpropionate/cinnamic acid dioxygenase ferredoxin--NAD(+) reductase component (400 aa).

5-36 is a binding site for FAD; it reads TIIIVGGGQAAAMAAASLRQQGFTGELHLFSD. 146-174 serves as a coordination point for NAD(+); sequence SVVIVGAGTIGLELAASATQRRCKVTVIE.

Belongs to the bacterial ring-hydroxylating dioxygenase ferredoxin reductase family. This dioxygenase system consists of four proteins: the two subunits of the hydroxylase component (HcaE and HcaF), a ferredoxin (HcaC) and a ferredoxin reductase (HcaD). The cofactor is FAD.

The enzyme catalyses 2 reduced [2Fe-2S]-[ferredoxin] + NAD(+) + H(+) = 2 oxidized [2Fe-2S]-[ferredoxin] + NADH. The protein operates within aromatic compound metabolism; 3-phenylpropanoate degradation. Its function is as follows. Part of the multicomponent 3-phenylpropionate dioxygenase, that converts 3-phenylpropionic acid (PP) and cinnamic acid (CI) into 3-phenylpropionate-dihydrodiol (PP-dihydrodiol) and cinnamic acid-dihydrodiol (CI-dihydrodiol), respectively. This chain is 3-phenylpropionate/cinnamic acid dioxygenase ferredoxin--NAD(+) reductase component, found in Shigella sonnei (strain Ss046).